Reading from the N-terminus, the 852-residue chain is Protein SEY1 (852 aa).

Residues 1–738 (MNGHFAAIGN…KRSAIGGITQ (738 aa)) are Cytoplasmic-facing. One can recognise a GB1/RHD3-type G domain in the interval 47 to 294 (GFNYHLISVF…IPADGLSVYA (248 aa)). 57–64 (GSQSTGKS) is a binding site for GTP. A coiled-coil region spans residues 475–500 (QYKLFEKELDEVSARLRKEEMRRLAI). A helical membrane pass occupies residues 739-759 (VPLYFYVILLILGWNEILMVL). Over 760–762 (RNP) the chain is Lumenal. The chain crosses the membrane as a helical span at residues 763 to 783 (FLILLILVMGGGTYIAYSLNL). The Cytoplasmic segment spans residues 784–852 (LGPMMQMSNA…AQDISDDDDI (69 aa)).

It belongs to the TRAFAC class dynamin-like GTPase superfamily. GB1/RHD3 GTPase family. RHD3 subfamily.

It localises to the endoplasmic reticulum membrane. Cooperates with the reticulon proteins and tubule-shaping DP1 family proteins to generate and maintain the structure of the tubular endoplasmic reticulum network. Has GTPase activity, which is required for its function in ER organization. The polypeptide is Protein SEY1 (Podospora anserina (strain S / ATCC MYA-4624 / DSM 980 / FGSC 10383) (Pleurage anserina)).